Consider the following 152-residue polypeptide: 6,7-dimethyl-8-ribityllumazine synthase (152 aa).

Residues Phe21, 55 to 57, and 79 to 81 each bind 5-amino-6-(D-ribitylamino)uracil; these read AFE and CVI. Position 84 to 85 (84 to 85) interacts with (2S)-2-hydroxy-3-oxobutyl phosphate; it reads AT. His87 acts as the Proton donor in catalysis. Phe112 contributes to the 5-amino-6-(D-ribitylamino)uracil binding site. Residue Arg126 coordinates (2S)-2-hydroxy-3-oxobutyl phosphate.

This sequence belongs to the DMRL synthase family. Forms an icosahedral capsid composed of 60 subunits, arranged as a dodecamer of pentamers.

It carries out the reaction (2S)-2-hydroxy-3-oxobutyl phosphate + 5-amino-6-(D-ribitylamino)uracil = 6,7-dimethyl-8-(1-D-ribityl)lumazine + phosphate + 2 H2O + H(+). The protein operates within cofactor biosynthesis; riboflavin biosynthesis; riboflavin from 2-hydroxy-3-oxobutyl phosphate and 5-amino-6-(D-ribitylamino)uracil: step 1/2. Its function is as follows. Catalyzes the formation of 6,7-dimethyl-8-ribityllumazine by condensation of 5-amino-6-(D-ribitylamino)uracil with 3,4-dihydroxy-2-butanone 4-phosphate. This is the penultimate step in the biosynthesis of riboflavin. The protein is 6,7-dimethyl-8-ribityllumazine synthase of Staphylococcus haemolyticus (strain JCSC1435).